The primary structure comprises 332 residues: Divalent cation transporter CmaX (332 aa).

The Cytoplasmic portion of the chain corresponds to 1-277 (MQAYESGDER…MNRTMYLLGI (277 aa)). Residues 278 to 286 (ITGFFLPMS) form a helical membrane-spanning segment. Over 287–307 (FVTGLLGINVGGIPGADAPHG) the chain is Periplasmic. Residues 308-323 (FWLACLLIGGVATFQW) traverse the membrane as a helical segment. The Cytoplasmic segment spans residues 324–332 (WVFRRLRWL).

It belongs to the CorA metal ion transporter (MIT) (TC 1.A.35) family. Homopentamer.

The protein resides in the cell inner membrane. The catalysed reaction is Zn(2+)(in) = Zn(2+)(out). It carries out the reaction Cd(2+)(in) = Cd(2+)(out). The enzyme catalyses Ni(2+)(in) = Ni(2+)(out). It catalyses the reaction Co(2+)(in) = Co(2+)(out). Functionally, transports divalent cations including Zn(2+), Cd(2+), Ni(2+) and Co(2+). The proton gradient has a small influence on transport suggesting that the transport is probably not proton-dependent. In Pseudomonas aeruginosa (strain ATCC 15692 / DSM 22644 / CIP 104116 / JCM 14847 / LMG 12228 / 1C / PRS 101 / PAO1), this protein is Divalent cation transporter CmaX.